Here is a 338-residue protein sequence, read N- to C-terminus: Glyceraldehyde-3-phosphate dehydrogenase (338 aa).

Residues Arg12–Ile13, Asp34, and Arg79 each bind NAD(+). D-glyceraldehyde 3-phosphate-binding positions include Ser150 to Thr152, Thr181, Thr210 to Gly211, and Arg233. Residue Cys151 is the Nucleophile of the active site. Asn316 contributes to the NAD(+) binding site.

The protein belongs to the glyceraldehyde-3-phosphate dehydrogenase family. In terms of assembly, homotetramer.

Its subcellular location is the cytoplasm. The enzyme catalyses D-glyceraldehyde 3-phosphate + phosphate + NAD(+) = (2R)-3-phospho-glyceroyl phosphate + NADH + H(+). It participates in carbohydrate degradation; glycolysis; pyruvate from D-glyceraldehyde 3-phosphate: step 1/5. The sequence is that of Glyceraldehyde-3-phosphate dehydrogenase (GPD) from Phaffia rhodozyma (Yeast).